Here is a 221-residue protein sequence, read N- to C-terminus: Thymidylate kinase (221 aa).

12–19 (GIDGAGKS) lines the ATP pocket.

The protein belongs to the thymidylate kinase family.

It catalyses the reaction dTMP + ATP = dTDP + ADP. Its function is as follows. Phosphorylation of dTMP to form dTDP in both de novo and salvage pathways of dTTP synthesis. This is Thymidylate kinase from Paracidovorax citrulli (strain AAC00-1) (Acidovorax citrulli).